The sequence spans 362 residues: UDP-N-acetylglucosamine--N-acetylmuramyl-(pentapeptide) pyrophosphoryl-undecaprenol N-acetylglucosamine transferase (362 aa).

UDP-N-acetyl-alpha-D-glucosamine is bound by residues Thr-10–Gly-12, Asn-124, Arg-161, Ser-195, and Gln-291.

It belongs to the glycosyltransferase 28 family. MurG subfamily.

The protein localises to the cell membrane. The catalysed reaction is di-trans,octa-cis-undecaprenyl diphospho-N-acetyl-alpha-D-muramoyl-L-alanyl-D-glutamyl-meso-2,6-diaminopimeloyl-D-alanyl-D-alanine + UDP-N-acetyl-alpha-D-glucosamine = di-trans,octa-cis-undecaprenyl diphospho-[N-acetyl-alpha-D-glucosaminyl-(1-&gt;4)]-N-acetyl-alpha-D-muramoyl-L-alanyl-D-glutamyl-meso-2,6-diaminopimeloyl-D-alanyl-D-alanine + UDP + H(+). The protein operates within cell wall biogenesis; peptidoglycan biosynthesis. In terms of biological role, cell wall formation. Catalyzes the transfer of a GlcNAc subunit on undecaprenyl-pyrophosphoryl-MurNAc-pentapeptide (lipid intermediate I) to form undecaprenyl-pyrophosphoryl-MurNAc-(pentapeptide)GlcNAc (lipid intermediate II). This is UDP-N-acetylglucosamine--N-acetylmuramyl-(pentapeptide) pyrophosphoryl-undecaprenol N-acetylglucosamine transferase from Streptomyces collinus.